Reading from the N-terminus, the 174-residue chain is F-box protein At1g70360 (174 aa).

In terms of domain architecture, F-box spans 136–174; the sequence is PPCFISLPRELKHKILESLPGVDIGTLACVSSELRDMAS.

This Arabidopsis thaliana (Mouse-ear cress) protein is F-box protein At1g70360.